Here is a 637-residue protein sequence, read N- to C-terminus: Phosphomethylpyrimidine synthase (637 aa).

Substrate-binding positions include Asn-242, Met-271, Tyr-300, His-336, 356–358 (SRG), 397–400 (DGLR), and Glu-436. His-440 contributes to the Zn(2+) binding site. Position 463 (Tyr-463) interacts with substrate. His-504 contributes to the Zn(2+) binding site. The [4Fe-4S] cluster site is built by Cys-584, Cys-587, and Cys-592.

The protein belongs to the ThiC family. Homodimer. Requires [4Fe-4S] cluster as cofactor.

The catalysed reaction is 5-amino-1-(5-phospho-beta-D-ribosyl)imidazole + S-adenosyl-L-methionine = 4-amino-2-methyl-5-(phosphooxymethyl)pyrimidine + CO + 5'-deoxyadenosine + formate + L-methionine + 3 H(+). The protein operates within cofactor biosynthesis; thiamine diphosphate biosynthesis. Catalyzes the synthesis of the hydroxymethylpyrimidine phosphate (HMP-P) moiety of thiamine from aminoimidazole ribotide (AIR) in a radical S-adenosyl-L-methionine (SAM)-dependent reaction. The protein is Phosphomethylpyrimidine synthase of Bordetella pertussis (strain Tohama I / ATCC BAA-589 / NCTC 13251).